The following is a 121-amino-acid chain: Heimdall profilin (121 aa).

This sequence belongs to the Asgard profilin family.

The protein localises to the cytoplasm. The protein resides in the cytoskeleton. Functionally, binds to actin and affects the structure of the cytoskeleton. At high concentrations inhibits spontaneous rabbit actin nucleation. This strongly suggests this archaea has a profilin-regulated actin system, and actin-type genes can be identified in this organism. The polypeptide is Heimdall profilin (Heimdallarchaeota archaeon (strain LC_2)).